Here is a 309-residue protein sequence, read N- to C-terminus: Protein FdhE homolog (309 aa).

Belongs to the FdhE family.

It localises to the cytoplasm. Functionally, necessary for formate dehydrogenase activity. The chain is Protein FdhE homolog from Klebsiella pneumoniae (strain 342).